Reading from the N-terminus, the 37-residue chain is MNRLLQRQLFLENLLVGTNSMFHQISKHSINTCCRSL.

It belongs to the rotavirus A NSP6 family. As to quaternary structure, interacts with NSP2 and NSP5.

It is found in the host cytoplasm. The protein localises to the host mitochondrion. The protein is Non-structural protein 6 of Rotavirus A (strain RVA/Human/United States/D/1974/G1P1A[8]) (RV-A).